We begin with the raw amino-acid sequence, 306 residues long: Pantothenate kinase (306 aa).

91–98 is an ATP binding site; that stretch reads GSVAVGKS.

This sequence belongs to the prokaryotic pantothenate kinase family.

The protein resides in the cytoplasm. It catalyses the reaction (R)-pantothenate + ATP = (R)-4'-phosphopantothenate + ADP + H(+). It functions in the pathway cofactor biosynthesis; coenzyme A biosynthesis; CoA from (R)-pantothenate: step 1/5. The protein is Pantothenate kinase of Streptococcus equi subsp. zooepidemicus (strain H70).